The chain runs to 404 residues: MSSSIFGPLTGFLERVNSLNAPYQALSYDEQKAMTIWQRVKFYNWTFELCALGVLFLVYAFYKFGNSVNLKRGNQIFQSLHSFLANDLKFSRVGFNINDSKIFTVEHQNTWFSSFATGRSAIKSINLNLHLVARSNPFSMCLEYLLGFFFASLKSKQLEEFMEIVIRPNGILVTSESAHPNKNAHEILTKFRFVTSIVNKEFMNQARTENYFLSIAHTSENDKLPNNFVYMSDVNQLSGFMFHYSKPYEVLSQAGNLLKYISFTDLPVNPPRDDKEWESSIEPKAIIRCAVPQNENELKLLNQIISLVVEIYDGFTQDLVQQSPNLFITNDILKRTTNLRQQELNKIKKFMKETELELAKEKKLELEKAKRRQLKASGQQEKVDQKMKEKRERRLKNKQRTRFQ.

Residue serine 2 is modified to N-acetylserine. Asparagine 44 is a glycosylation site (N-linked (GlcNAc...) asparagine). The helical transmembrane segment at leucine 49–valine 68 threads the bilayer. Asparagine 98 is a glycosylation site (N-linked (GlcNAc...) asparagine). The interval alanine 369–glutamine 404 is disordered. Positions glutamate 381–glutamate 392 are enriched in basic and acidic residues. Positions arginine 393–glutamine 404 are enriched in basic residues.

This sequence belongs to the UPF0674 family.

The protein localises to the endoplasmic reticulum membrane. This Saccharomyces cerevisiae (strain ATCC 204508 / S288c) (Baker's yeast) protein is UPF0674 endoplasmic reticulum membrane protein YNR021W.